The chain runs to 465 residues: Ribosomal oxygenase 2 (465 aa).

In terms of domain architecture, JmjC spans 139 to 271 (QPQRFKDELW…NSWGDFLLDT (133 aa)). Positions 179, 181, and 240 each coordinate Fe cation. Residue serine 309 is modified to Phosphoserine.

It belongs to the ROX family. MINA53 subfamily. Requires Fe(2+) as cofactor. Expressed in liver, skeletal muscle, heart, pancreas, and placenta. Not detected in brain, lung or kidney. Expressed in several lung cancer tissues, but is barely detected in the adjacent non-cancerous tissues. Also highly expressed in several esophageal squamous cell carcinoma (ESCC), and colon cancer tissues, and in various cancer cell lines.

The protein resides in the nucleus. It localises to the nucleolus. It carries out the reaction L-histidyl-[protein] + 2-oxoglutarate + O2 = (3S)-3-hydroxy-L-histidyl-[protein] + succinate + CO2. The catalysed reaction is L-histidyl-[ribosomal protein uL15] + 2-oxoglutarate + O2 = (3S)-3-hydroxy-L-histidyl-[ribosomal protein uL15] + succinate + CO2. Its function is as follows. Oxygenase that can act as both a histone lysine demethylase and a ribosomal histidine hydroxylase. Is involved in the demethylation of trimethylated 'Lys-9' on histone H3 (H3K9me3), leading to an increase in ribosomal RNA expression. Also catalyzes the hydroxylation of 60S ribosomal protein L27a on 'His-39'. May play an important role in cell growth and survival. May be involved in ribosome biogenesis, most likely during the assembly process of pre-ribosomal particles. This chain is Ribosomal oxygenase 2, found in Homo sapiens (Human).